The chain runs to 152 residues: Putative pseudoazurin (152 aa).

The first 23 residues, 1 to 23, serve as a signal peptide directing secretion; sequence MPLKFGLIVATAALIASAASLMA. In terms of domain architecture, Plastocyanin-like spans 28–116; sequence VQMLNKGTDG…MGMVALIQVG (89 aa). Cu cation-binding residues include His-63, Cys-101, His-104, and Met-109.

Cu cation serves as cofactor.

It localises to the periplasm. Its function is as follows. This soluble electron transfer copper protein is required for the inactivation of copper-containing nitrite reductase in the presence of oxygen. This is Putative pseudoazurin (azu) from Rhizobium leguminosarum bv. viciae.